The sequence spans 218 residues: Glutathione S-transferase Mu 4 (218 aa).

In terms of domain architecture, GST N-terminal spans 2–88 (SMTLGYWDIR…YIARKHNLCG (87 aa)). Glutathione-binding positions include 7–8 (YW), 46–50 (WLNEK), 59–60 (NL), and 72–73 (QS). Positions 90–208 (TEEEKIRVDI…KSSRFLPKPL (119 aa)) constitute a GST C-terminal domain. Position 116 (Y116) interacts with substrate.

The protein belongs to the GST superfamily. Mu family. As to quaternary structure, homodimer. Expressed in a wide variety of tissues.

It is found in the cytoplasm. The catalysed reaction is RX + glutathione = an S-substituted glutathione + a halide anion + H(+). It catalyses the reaction 1-chloro-2,4-dinitrobenzene + glutathione = 2,4-dinitrophenyl-S-glutathione + chloride + H(+). It carries out the reaction (13S,14S)-epoxy-(4Z,7Z,9E,11E,16Z,19Z)-docosahexaenoate + glutathione = (13R)-S-glutathionyl-(14S)-hydroxy-(4Z,7Z,9E,11E,16Z,19Z)-docosahexaenoate. The enzyme catalyses leukotriene C4 = leukotriene A4 + glutathione. Conjugation of reduced glutathione to a wide number of exogenous and endogenous hydrophobic electrophiles. Catalyzes the conjugation of leukotriene A4 with reduced glutathione (GSH) to form leukotriene C4. Can also catalyze the transfer of a glutathionyl group from glutathione (GSH) to 13(S),14(S)-epoxy-docosahexaenoic acid to form maresin conjugate in tissue regeneration 1 (MCTR1), a bioactive lipid mediator that possess potent anti-inflammatory and proresolving actions. The protein is Glutathione S-transferase Mu 4 (GSTM4) of Homo sapiens (Human).